Here is a 203-residue protein sequence, read N- to C-terminus: ATP-dependent Clp protease proteolytic subunit (203 aa).

The Nucleophile role is filled by S107. Residue H132 is part of the active site.

The protein belongs to the peptidase S14 family. Fourteen ClpP subunits assemble into 2 heptameric rings which stack back to back to give a disk-like structure with a central cavity, resembling the structure of eukaryotic proteasomes.

The protein resides in the cytoplasm. It carries out the reaction Hydrolysis of proteins to small peptides in the presence of ATP and magnesium. alpha-casein is the usual test substrate. In the absence of ATP, only oligopeptides shorter than five residues are hydrolyzed (such as succinyl-Leu-Tyr-|-NHMec, and Leu-Tyr-Leu-|-Tyr-Trp, in which cleavage of the -Tyr-|-Leu- and -Tyr-|-Trp bonds also occurs).. Functionally, cleaves peptides in various proteins in a process that requires ATP hydrolysis. Has a chymotrypsin-like activity. Plays a major role in the degradation of misfolded proteins. The chain is ATP-dependent Clp protease proteolytic subunit from Shewanella sediminis (strain HAW-EB3).